The following is a 361-amino-acid chain: UDP-N-acetylglucosamine--N-acetylmuramyl-(pentapeptide) pyrophosphoryl-undecaprenol N-acetylglucosamine transferase (361 aa).

Residues 12-14 (TGG), N123, R166, S192, and Q293 contribute to the UDP-N-acetyl-alpha-D-glucosamine site.

It belongs to the glycosyltransferase 28 family. MurG subfamily.

Its subcellular location is the cell inner membrane. It catalyses the reaction di-trans,octa-cis-undecaprenyl diphospho-N-acetyl-alpha-D-muramoyl-L-alanyl-D-glutamyl-meso-2,6-diaminopimeloyl-D-alanyl-D-alanine + UDP-N-acetyl-alpha-D-glucosamine = di-trans,octa-cis-undecaprenyl diphospho-[N-acetyl-alpha-D-glucosaminyl-(1-&gt;4)]-N-acetyl-alpha-D-muramoyl-L-alanyl-D-glutamyl-meso-2,6-diaminopimeloyl-D-alanyl-D-alanine + UDP + H(+). It functions in the pathway cell wall biogenesis; peptidoglycan biosynthesis. Its function is as follows. Cell wall formation. Catalyzes the transfer of a GlcNAc subunit on undecaprenyl-pyrophosphoryl-MurNAc-pentapeptide (lipid intermediate I) to form undecaprenyl-pyrophosphoryl-MurNAc-(pentapeptide)GlcNAc (lipid intermediate II). The polypeptide is UDP-N-acetylglucosamine--N-acetylmuramyl-(pentapeptide) pyrophosphoryl-undecaprenol N-acetylglucosamine transferase (Caulobacter vibrioides (strain ATCC 19089 / CIP 103742 / CB 15) (Caulobacter crescentus)).